The primary structure comprises 203 residues: Peptide deformylase (203 aa).

Residues Cys121 and His163 each contribute to the Fe cation site. Glu164 is a catalytic residue. Residue His167 participates in Fe cation binding.

The protein belongs to the polypeptide deformylase family. Fe(2+) is required as a cofactor.

The enzyme catalyses N-terminal N-formyl-L-methionyl-[peptide] + H2O = N-terminal L-methionyl-[peptide] + formate. Its function is as follows. Removes the formyl group from the N-terminal Met of newly synthesized proteins. Requires at least a dipeptide for an efficient rate of reaction. N-terminal L-methionine is a prerequisite for activity but the enzyme has broad specificity at other positions. This is Peptide deformylase from Prochlorococcus marinus (strain MIT 9515).